A 157-amino-acid chain; its full sequence is uncharacterized protein (157 aa).

2 disordered regions span residues 76–105 (AINQ…GPRG) and 132–157 (VRAP…RMRG). Residues 135-148 (PSTKPSKTSSSNNP) are compositionally biased toward low complexity.

To M.pneumoniae MPN_091 and MPN_413.

This is an uncharacterized protein from Mycoplasma pneumoniae (strain ATCC 29342 / M129 / Subtype 1) (Mycoplasmoides pneumoniae).